Here is a 317-residue protein sequence, read N- to C-terminus: Curved DNA-binding protein (317 aa).

The J domain occupies 5–69 (DYYKILGVEP…QKRAEFDEIR (65 aa)).

The protein resides in the cytoplasm. It localises to the nucleoid. In terms of biological role, DNA-binding protein that preferentially recognizes a curved DNA sequence. It is probably a functional analog of DnaJ; displays overlapping activities with DnaJ, but functions under different conditions, probably acting as a molecular chaperone in an adaptive response to environmental stresses other than heat shock. Lacks autonomous chaperone activity; binds native substrates and targets them for recognition by DnaK. Its activity is inhibited by the binding of CbpM. The chain is Curved DNA-binding protein from Pseudomonas putida (strain W619).